A 33-amino-acid chain; its full sequence is Photosystem II reaction center protein T (33 aa).

Residues 3–23 form a helical membrane-spanning segment; that stretch reads ALVYTFLLVSTLGIIFFAIFF.

This sequence belongs to the PsbT family. As to quaternary structure, PSII is composed of 1 copy each of membrane proteins PsbA, PsbB, PsbC, PsbD, PsbE, PsbF, PsbH, PsbI, PsbJ, PsbK, PsbL, PsbM, PsbT, PsbY, PsbZ, Psb30/Ycf12, at least 3 peripheral proteins of the oxygen-evolving complex and a large number of cofactors. It forms dimeric complexes.

Its subcellular location is the plastid. It is found in the chloroplast thylakoid membrane. Found at the monomer-monomer interface of the photosystem II (PS II) dimer, plays a role in assembly and dimerization of PSII. PSII is a light-driven water plastoquinone oxidoreductase, using light energy to abstract electrons from H(2)O, generating a proton gradient subsequently used for ATP formation. The protein is Photosystem II reaction center protein T of Helianthus annuus (Common sunflower).